We begin with the raw amino-acid sequence, 540 residues long: Chaperonin GroEL 2 (540 aa).

Residues 30 to 33, Lys-51, 87 to 91, Gly-415, 479 to 481, and Asp-495 contribute to the ATP site; these read TLGP, DGTTT, and NAA.

It belongs to the chaperonin (HSP60) family. As to quaternary structure, forms a cylinder of 14 subunits composed of two heptameric rings stacked back-to-back. Interacts with the co-chaperonin GroES.

It is found in the cytoplasm. The catalysed reaction is ATP + H2O + a folded polypeptide = ADP + phosphate + an unfolded polypeptide.. Functionally, together with its co-chaperonin GroES, plays an essential role in assisting protein folding. The GroEL-GroES system forms a nano-cage that allows encapsulation of the non-native substrate proteins and provides a physical environment optimized to promote and accelerate protein folding. The chain is Chaperonin GroEL 2 from Burkholderia vietnamiensis (strain G4 / LMG 22486) (Burkholderia cepacia (strain R1808)).